The primary structure comprises 434 residues: UDP-N-acetylglucosamine 1-carboxyvinyltransferase (434 aa).

22-23 contributes to the phosphoenolpyruvate binding site; it reads KN. Arg-99 provides a ligand contact to UDP-N-acetyl-alpha-D-glucosamine. Cys-123 (proton donor) is an active-site residue. At Cys-123 the chain carries 2-(S-cysteinyl)pyruvic acid O-phosphothioketal. UDP-N-acetyl-alpha-D-glucosamine contacts are provided by residues 128-132, Asp-317, and Ile-339; that span reads RPVDQ.

The protein belongs to the EPSP synthase family. MurA subfamily.

The protein localises to the cytoplasm. It catalyses the reaction phosphoenolpyruvate + UDP-N-acetyl-alpha-D-glucosamine = UDP-N-acetyl-3-O-(1-carboxyvinyl)-alpha-D-glucosamine + phosphate. Its pathway is cell wall biogenesis; peptidoglycan biosynthesis. In terms of biological role, cell wall formation. Adds enolpyruvyl to UDP-N-acetylglucosamine. The protein is UDP-N-acetylglucosamine 1-carboxyvinyltransferase of Paracidovorax citrulli (strain AAC00-1) (Acidovorax citrulli).